The following is a 249-amino-acid chain: EID1-like F-box protein 2 (249 aa).

Positions 16-68 (HCTKGHLSEEVLFLMVQHLNWNPNVIATLSCVCKWFDDLAKRLLWKEFCRARA) constitute an F-box domain.

The sequence is that of EID1-like F-box protein 2 (EDL2) from Arabidopsis thaliana (Mouse-ear cress).